Reading from the N-terminus, the 167-residue chain is Ubiquitin-fold modifier-conjugating enzyme 1 (167 aa).

Residue Cys-116 is the Glycyl thioester intermediate of the active site. Lys-122 participates in a covalent cross-link: Glycyl lysine isopeptide (Lys-Gly) (interchain with G-Cter in UFM1).

Belongs to the ubiquitin-conjugating enzyme family. UFC1 subfamily. Interacts with UBA5 (via C-terminus). Interacts with UFL1. Interacts with UFM1. Interacts with KIRREL3. Post-translationally, ufmylated at Lys-122. Deufmylated by UFSP1.

E2-like enzyme which specifically catalyzes the second step in ufmylation. Accepts the ubiquitin-like modifier UFM1 from the E1 enzyme UBA5 and forms an intermediate with UFM1 via a thioester linkage. Ufmylation is involved in various processes, such as ribosome recycling, response to DNA damage, interferon response or reticulophagy (also called ER-phagy). This Homo sapiens (Human) protein is Ubiquitin-fold modifier-conjugating enzyme 1.